The following is a 110-amino-acid chain: UPF0060 membrane protein MMAR_2961 (110 aa).

A run of 4 helical transmembrane segments spans residues 6-26 (ILLFIVAAVAEIGGAWLVWQG), 32-52 (GLAWIGAGVIALGLYGFVATL), 61-81 (ILAAYGGIFVAGSLLWGMAFD), and 90-110 (IVGALVCLAGVGVIMYAPRAH).

It belongs to the UPF0060 family.

It localises to the cell membrane. In Mycobacterium marinum (strain ATCC BAA-535 / M), this protein is UPF0060 membrane protein MMAR_2961.